We begin with the raw amino-acid sequence, 551 residues long: Xylulose kinase (551 aa).

Residues His-114, Arg-185, Asp-295, and Asn-296 each contribute to the substrate site. Residues Trp-370, 456-457 (GA), and Asn-460 contribute to the ATP site.

This sequence belongs to the FGGY kinase family. Monomer.

The enzyme catalyses D-xylulose + ATP = D-xylulose 5-phosphate + ADP + H(+). In terms of biological role, phosphorylates D-xylulose to produce D-xylulose 5-phosphate, a molecule that may play an important role in the regulation of glucose metabolism and lipogenesis. This chain is Xylulose kinase (Xylb), found in Mus musculus (Mouse).